The sequence spans 553 residues: Carboxypeptidase Y homolog A (553 aa).

An N-terminal signal peptide occupies residues 1–17 (MRVLSTTLLIGAAAAAV). Positions 18–134 (SPPQQVLQAP…RLEAFDLRVK (117 aa)) are excised as a propeptide. Intrachain disulfides connect C189-C428, C323-C337, C347-C370, C354-C363, and C392-C398. N-linked (GlcNAc...) asparagine glycosylation is present at N220. S276 is a catalytic residue. D467 is an active-site residue. N-linked (GlcNAc...) asparagine glycosylation is present at N518. H529 is an active-site residue.

This sequence belongs to the peptidase S10 family.

It is found in the vacuole. It carries out the reaction Release of a C-terminal amino acid with broad specificity.. Vacuolar carboxypeptidase involved in degradation of small peptides. Digests preferentially peptides containing an aliphatic or hydrophobic residue in P1' position, as well as methionine, leucine or phenylalanine in P1 position of ester substrate. The polypeptide is Carboxypeptidase Y homolog A (cpyA) (Talaromyces stipitatus (strain ATCC 10500 / CBS 375.48 / QM 6759 / NRRL 1006) (Penicillium stipitatum)).